A 235-amino-acid chain; its full sequence is Leucyl/phenylalanyl-tRNA--protein transferase (235 aa).

It belongs to the L/F-transferase family.

It localises to the cytoplasm. It carries out the reaction N-terminal L-lysyl-[protein] + L-leucyl-tRNA(Leu) = N-terminal L-leucyl-L-lysyl-[protein] + tRNA(Leu) + H(+). The catalysed reaction is N-terminal L-arginyl-[protein] + L-leucyl-tRNA(Leu) = N-terminal L-leucyl-L-arginyl-[protein] + tRNA(Leu) + H(+). It catalyses the reaction L-phenylalanyl-tRNA(Phe) + an N-terminal L-alpha-aminoacyl-[protein] = an N-terminal L-phenylalanyl-L-alpha-aminoacyl-[protein] + tRNA(Phe). Functions in the N-end rule pathway of protein degradation where it conjugates Leu, Phe and, less efficiently, Met from aminoacyl-tRNAs to the N-termini of proteins containing an N-terminal arginine or lysine. The polypeptide is Leucyl/phenylalanyl-tRNA--protein transferase (Aeromonas hydrophila subsp. hydrophila (strain ATCC 7966 / DSM 30187 / BCRC 13018 / CCUG 14551 / JCM 1027 / KCTC 2358 / NCIMB 9240 / NCTC 8049)).